Reading from the N-terminus, the 409-residue chain is Argininosuccinate synthase (409 aa).

ATP contacts are provided by residues 16–24 (AYSGGLDTS) and alanine 44. 2 residues coordinate L-citrulline: tyrosine 96 and serine 101. Glycine 126 is an ATP binding site. The L-aspartate site is built by threonine 128, asparagine 132, and aspartate 133. Residue asparagine 132 coordinates L-citrulline. 5 residues coordinate L-citrulline: arginine 136, serine 185, serine 194, glutamate 270, and tyrosine 282.

This sequence belongs to the argininosuccinate synthase family. Type 1 subfamily. In terms of assembly, homotetramer.

Its subcellular location is the cytoplasm. It carries out the reaction L-citrulline + L-aspartate + ATP = 2-(N(omega)-L-arginino)succinate + AMP + diphosphate + H(+). Its pathway is amino-acid biosynthesis; L-arginine biosynthesis; L-arginine from L-ornithine and carbamoyl phosphate: step 2/3. This Shewanella piezotolerans (strain WP3 / JCM 13877) protein is Argininosuccinate synthase.